We begin with the raw amino-acid sequence, 487 residues long: Histamine H1 receptor (487 aa).

Residues 1 to 29 (MSLPNSSCLLEDKMCEGNKTTMASPQLMP) are Extracellular-facing. Asn5 and Asn18 each carry an N-linked (GlcNAc...) asparagine glycan. Residues 30-50 (LVVVLSTISLVTVGLNLLVLY) form a helical membrane-spanning segment. The Cytoplasmic segment spans residues 51–64 (AVRSERKLHTVGNL). A helical transmembrane segment spans residues 65 to 89 (YIVSLSVADLIVGAVVMPMNILYLL). Topologically, residues 90–97 (MSKWSLGR) are extracellular. Residues 98–123 (PLCLFWLSMDYVASTASIFSVFILCI) form a helical membrane-spanning segment. Residues Cys100 and Cys180 are joined by a disulfide bond. The histamine site is built by Asp107 and Thr112. An important for agonist binding region spans residues 107–112 (DYVAST). Residues 124 to 144 (DRYRSVQQPLRYLKYRTKTRA) are Cytoplasmic-facing. Residues Thr140 and Thr142 each carry the phosphothreonine modification. A helical membrane pass occupies residues 145-164 (SATILGAWFLSFLWVIPILG). Residues 165–188 (WNHFRQQISVRREDKCETDFYDVT) are Extracellular-facing. The chain crosses the membrane as a helical span at residues 189–211 (WFKVMTAIINFYLPTLLMLWFYA). A histamine-binding site is contributed by Asn198. Residues 212–416 (KIYKAVQKHC…MNRERKAAKQ (205 aa)) are Cytoplasmic-facing. Ser230 bears the Phosphoserine mark. Residues 238 to 261 (KLRPENPKGDAKKPGKESPWEVLK) show a composition bias toward basic and acidic residues. Residues 238-286 (KLRPENPKGDAKKPGKESPWEVLKRKPKDAGGGSVLKSPSQTPKEMKSP) are disordered. At Thr279 the chain carries Phosphothreonine. Phosphoserine occurs at positions 344 and 347. Residues 345–379 (EISEDQMLGDSQSFSRTDSDTTTETAPGKGKLRSG) form a disordered region. The segment covering 353-369 (GDSQSFSRTDSDTTTET) has biased composition (polar residues). Phosphoserine is present on residues Ser380, Ser396, and Ser398. The helical transmembrane segment at 417 to 440 (LGFIMAAFILCWIPYFIFFMVIAF) threads the bilayer. The interval 424–428 (FILCW) is important for agonist binding. Tyr431 contacts histamine. Cys441 and Cys444 form a disulfide bridge. Residues 441-446 (CKNCCN) lie on the Extracellular side of the membrane. Residues 447–469 (EHLHMFTIWLGYINSTLNPLIYP) traverse the membrane as a helical segment. Residues 470–487 (LCNENFKKTFKRILHIRS) are Cytoplasmic-facing.

Belongs to the G-protein coupled receptor 1 family. Post-translationally, phosphorylation at sites in the second and third cytoplasmic loops independently contribute to agonist-induced receptor down-regulation.

It localises to the cell membrane. Functionally, G-protein-coupled receptor for histamine, a biogenic amine that functions as an immune modulator and a neurotransmitter. Through the H1 receptor, histamine mediates the contraction of smooth muscles and increases capillary permeability due to contraction of terminal venules. Also mediates neurotransmission in the central nervous system and thereby regulates circadian rhythms, emotional and locomotor activities as well as cognitive functions. The protein is Histamine H1 receptor of Pongo pygmaeus (Bornean orangutan).